Reading from the N-terminus, the 261-residue chain is MEMO1 family protein AF_2310 (261 aa).

It belongs to the MEMO1 family.

This is MEMO1 family protein AF_2310 from Archaeoglobus fulgidus (strain ATCC 49558 / DSM 4304 / JCM 9628 / NBRC 100126 / VC-16).